Here is a 506-residue protein sequence, read N- to C-terminus: Probable cytosol aminopeptidase (506 aa).

2 residues coordinate Mn(2+): K270 and D275. The active site involves K282. Positions 293, 352, and 354 each coordinate Mn(2+). R356 is an active-site residue.

It belongs to the peptidase M17 family. Mn(2+) serves as cofactor.

Its subcellular location is the cytoplasm. The enzyme catalyses Release of an N-terminal amino acid, Xaa-|-Yaa-, in which Xaa is preferably Leu, but may be other amino acids including Pro although not Arg or Lys, and Yaa may be Pro. Amino acid amides and methyl esters are also readily hydrolyzed, but rates on arylamides are exceedingly low.. The catalysed reaction is Release of an N-terminal amino acid, preferentially leucine, but not glutamic or aspartic acids.. Presumably involved in the processing and regular turnover of intracellular proteins. Catalyzes the removal of unsubstituted N-terminal amino acids from various peptides. The protein is Probable cytosol aminopeptidase of Photorhabdus laumondii subsp. laumondii (strain DSM 15139 / CIP 105565 / TT01) (Photorhabdus luminescens subsp. laumondii).